Here is a 416-residue protein sequence, read N- to C-terminus: DNA-guanine transglycosylase (416 aa).

Catalysis depends on Asp-95, which acts as the Proton acceptor. Asp-256 acts as the Nucleophile in catalysis. Residues Cys-368, Cys-370, Cys-373, and His-395 each contribute to the Zn(2+) site.

The protein belongs to the DNA-guanine transglycosylase family. Requires Zn(2+) as cofactor.

Its function is as follows. Part of the dpd cluster involved in the insertion of 7-deazaguanine derivatives in DNA. DpdA may insert 7-cyano-7-deazaguanine (preQ0) into DNA with the help of DpdB. DpdA and dpdB are necessary and sufficient to synthesize 2'-deoxy-7-cyano-7-deazaguanosine (dPreQ0). The chain is DNA-guanine transglycosylase from Salmonella montevideo.